We begin with the raw amino-acid sequence, 86 residues long: MKTLLLTLVVVTIVCLDLGYTLTCLICPEKDCQKVHTCRNEEKICVKRFYDKNQLGWRAQRGCAVSCPKAKPNETVQCCSTDDCNR.

An N-terminal signal peptide occupies residues 1–23 (MKTLLLTLVVVTIVCLDLGYTLT). Disulfide bonds link Cys24/Cys45, Cys27/Cys32, Cys38/Cys63, Cys67/Cys78, and Cys79/Cys84.

The protein belongs to the three-finger toxin family. Ancestral subfamily. Orphan group II sub-subfamily. Expressed by the venom gland.

It is found in the secreted. Its function is as follows. Binds with low affinity to muscular (alpha-1-beta-1-delta-epsilon/CHRNA1-CHRNB1-CHRND-CHRNE) and very low affinity to neuronal (alpha-7/CHRNA7) nicotinic acetylcholine receptor (nAChR). The protein is Weak toxin 3 of Bungarus candidus (Malayan krait).